The primary structure comprises 375 residues: MAPGEREREAGPAKSALRKVRTATLVINLARGWQQWANENSTKQAQEPAGWLPGATHDLPNAPKEAGPYQHAPKTLSPKPDRDGEGQHSEEATEVSHIKRKEVTRTVVSKAYERGGDVNYLSHRYENDGGVSEAIQPENDIDRILLSHDSPTRRRKCTNLVSELTKGWKVMEQEEPTWKSDSVDTEDSGYGGDMEERPEQDAAPVAPARIKRPLLSQANRYSETLNCKAHRKYSQVDNLKGRWQQWADEHVQSQKLNPFSDEFDYDLAMSTRLHKGDEGYGRPKEGSKTAERAKRAEEHIYREIMELCFVIRTMARHRRDGKIQVTFGELFDRYVRISDKVVGILMRARKHGLVHFEGEMLWQGRDDHVVITLLE.

2 stretches are compositionally biased toward basic and acidic residues: residues 1–11 (MAPGEREREAG) and 79–99 (KPDRDGEGQHSEEATEVSHIK). 2 disordered regions span residues 1–20 (MAPGEREREAGPAKSALRKV) and 38–99 (NENS…SHIK). S150 and S182 each carry phosphoserine. Basic and acidic residues predominate over residues 173–182 (QEEPTWKSDS). Positions 173 to 204 (QEEPTWKSDSVDTEDSGYGGDMEERPEQDAAP) are disordered. 2 actin-binding regions span residues 193–293 (DMEE…AERA) and 294–375 (KRAE…TLLE). Interaction with actin stretches follow at residues 234–279 (SQVD…GDEG) and 346–375 (MRARKHGLVHFEGEMLWQGRDDHVVITLLE).

As to quaternary structure, binds F-actin and ABLIM1, ABLIM2 and ABLIM3. Interaction with ABLIM2 and ABLIM3 enhances activity. As to expression, expressed specifically in heart and skeletal muscle.

It localises to the cytoplasm. The protein resides in the myofibril. The protein localises to the sarcomere. Its subcellular location is the cytoskeleton. Its function is as follows. Acts as an activator of serum response factor (SRF)-dependent transcription possibly by inducing nuclear translocation of MKL1 or MKL2 and through a mechanism requiring Rho-actin signaling. This is Actin-binding Rho-activating protein from Mus musculus (Mouse).